The primary structure comprises 390 residues: Chitinase-3-like protein 2 (390 aa).

The first 26 residues, 1 to 26 (MGATTMDQKSLWAGVVVLLLLQGGSA), serve as a signal peptide directing secretion. Positions 27-390 (YKLVCYFTNW…QAVKRSLGSL (364 aa)) constitute a GH18 domain. Cysteines 31 and 56 form a disulfide. Asn35 carries N-linked (GlcNAc...) asparagine glycosylation. Residues 75–76 (DK), 102–105 (GGYL), Tyr104, Tyr146, 210–213 (LSFD), Asp213, and Trp360 contribute to the chitin site.

This sequence belongs to the glycosyl hydrolase 18 family. In terms of tissue distribution, highest expression in chondrocytes, followed by synoviocytes, lung and heart. Not detected in spleen, pancreas, and liver. May also be expressed in developing brain and placenta.

It is found in the secreted. Its function is as follows. Lectin that binds chitooligosaccharides and other glycans with high affinity, but not heparin. Has no chitinase activity. The sequence is that of Chitinase-3-like protein 2 (CHI3L2) from Homo sapiens (Human).